A 421-amino-acid chain; its full sequence is Histidine--tRNA ligase (421 aa).

This sequence belongs to the class-II aminoacyl-tRNA synthetase family. As to quaternary structure, homodimer.

The protein localises to the cytoplasm. It carries out the reaction tRNA(His) + L-histidine + ATP = L-histidyl-tRNA(His) + AMP + diphosphate + H(+). The chain is Histidine--tRNA ligase from Nitrosomonas eutropha (strain DSM 101675 / C91 / Nm57).